The chain runs to 376 residues: Hydroxylysine kinase (376 aa).

The active-site Proton acceptor is the D229.

Belongs to the aminoglycoside phosphotransferase family.

The protein localises to the cytoplasm. The catalysed reaction is (5R)-5-hydroxy-L-lysine + GTP = (5R)-5-phosphooxy-L-lysine + GDP + H(+). Its function is as follows. Catalyzes the GTP-dependent phosphorylation of 5-hydroxy-L-lysine. This chain is Hydroxylysine kinase (HYKK), found in Bos taurus (Bovine).